The primary structure comprises 327 residues: Geranylgeranyl transferase type-2 subunit alpha (327 aa).

PFTA repeat units lie at residues 44–78 (YSIE…SLAS), 84–118 (FWDK…HYPT), 123–157 (VWQT…NIES), 163–197 (LDKE…RMFQ), and 207–241 (YIRT…NDIV).

This sequence belongs to the protein prenyltransferase subunit alpha family. Heterodimer of an alpha and a beta subunit.

The catalysed reaction is geranylgeranyl diphosphate + L-cysteinyl-[protein] = S-geranylgeranyl-L-cysteinyl-[protein] + diphosphate. Its function is as follows. Catalyzes the transfer of a geranyl-geranyl moiety from geranyl-geranyl pyrophosphate to proteins having the C-terminal -XCC or -XCXC, where both cysteines may become modified. Acts on YPT1 and SEC4. The polypeptide is Geranylgeranyl transferase type-2 subunit alpha (BET4) (Saccharomyces cerevisiae (strain ATCC 204508 / S288c) (Baker's yeast)).